Here is a 363-residue protein sequence, read N- to C-terminus: DNA polymerase IV (363 aa).

Residues 14 to 197 enclose the UmuC domain; sequence IIHIDMDAFF…LPVEKFHGVG (184 aa). Mg(2+) contacts are provided by Asp-18 and Asp-115. Glu-116 is an active-site residue.

This sequence belongs to the DNA polymerase type-Y family. In terms of assembly, monomer. Requires Mg(2+) as cofactor.

The protein localises to the cytoplasm. The catalysed reaction is DNA(n) + a 2'-deoxyribonucleoside 5'-triphosphate = DNA(n+1) + diphosphate. Its function is as follows. Poorly processive, error-prone DNA polymerase involved in untargeted mutagenesis. Copies undamaged DNA at stalled replication forks, which arise in vivo from mismatched or misaligned primer ends. These misaligned primers can be extended by PolIV. Exhibits no 3'-5' exonuclease (proofreading) activity. May be involved in translesional synthesis, in conjunction with the beta clamp from PolIII. In Lactococcus lactis subsp. lactis (strain IL1403) (Streptococcus lactis), this protein is DNA polymerase IV.